Consider the following 201-residue polypeptide: Small ribosomal subunit protein uS4c (201 aa).

Residues 15-43 (LGALPGLTSKRPRSGSDLRNQSRSGKRSQ) are disordered. The S4 RNA-binding domain occupies 89 to 150 (MRLDNILFRL…KERSRALIQN (62 aa)).

Belongs to the universal ribosomal protein uS4 family. As to quaternary structure, part of the 30S ribosomal subunit. Contacts protein S5. The interaction surface between S4 and S5 is involved in control of translational fidelity.

It is found in the plastid. Its subcellular location is the chloroplast. One of the primary rRNA binding proteins, it binds directly to 16S rRNA where it nucleates assembly of the body of the 30S subunit. In terms of biological role, with S5 and S12 plays an important role in translational accuracy. This is Small ribosomal subunit protein uS4c (rps4) from Amborella trichopoda.